The primary structure comprises 167 residues: Large ribosomal subunit protein uL10 (167 aa).

The protein belongs to the universal ribosomal protein uL10 family. In terms of assembly, part of the ribosomal stalk of the 50S ribosomal subunit. The N-terminus interacts with L11 and the large rRNA to form the base of the stalk. The C-terminus forms an elongated spine to which L12 dimers bind in a sequential fashion forming a multimeric L10(L12)X complex.

In terms of biological role, forms part of the ribosomal stalk, playing a central role in the interaction of the ribosome with GTP-bound translation factors. The polypeptide is Large ribosomal subunit protein uL10 (Erwinia tasmaniensis (strain DSM 17950 / CFBP 7177 / CIP 109463 / NCPPB 4357 / Et1/99)).